Consider the following 61-residue polypeptide: Alpha-conotoxin EIIA (61 aa).

Residues 1–16 form the signal peptide; sequence MFIVFLLVVLATTVGS. Positions 17-40 are excised as a propeptide; it reads FTLDRVLEGRNAAAIDNALDQRDP. Gln43 carries the post-translational modification Pyrrolidone carboxylic acid. At Pro45 the chain carries Hydroxyproline. Disulfide bonds link Cys47–Cys53 and Cys48–Cys58. Residue Cys58 is modified to Cysteine amide.

It belongs to the conotoxin A superfamily. In terms of tissue distribution, expressed by the venom duct.

It localises to the secreted. Functionally, alpha-conotoxins bind to the nicotinic acetylcholine receptors (nAChR) and inhibit them. This peptide potently blocks muscular nicotinic acetylcholine receptor (CHRNA1-CHRNB1-CHRNG-CHRND), and has no effect on neuronal receptors. It is able to totally displace [125I]-Bgtx from the Torpedo receptor with a complete inhibition in the high micromolar range. It produces a biphasic inhibition curve which fits nicely with a two-site model (Ki of 0.46 and 105 nM). In Conus ermineus (Agate cone), this protein is Alpha-conotoxin EIIA.